A 312-amino-acid chain; its full sequence is R2-like ligand binding oxidase (312 aa).

Positions 68, 101, and 104 each coordinate Mn(2+). Residues 71-162 (VTQDIQPFMA…AAQVRASVTY (92 aa)) constitute a cross-link (3-(O4'-tyrosyl)-valine (Val-Tyr)). Residue Glu-101 participates in Fe cation binding. Positions 167, 202, and 205 each coordinate Fe cation.

Belongs to the ribonucleoside diphosphate reductase small chain family. R2-like ligand binding oxidase subfamily. Homodimer. Fe cation is required as a cofactor. The cofactor is Mn(2+).

Probable oxidase that might be involved in lipid metabolism. The polypeptide is R2-like ligand binding oxidase (Mycolicibacterium vanbaalenii (strain DSM 7251 / JCM 13017 / BCRC 16820 / KCTC 9966 / NRRL B-24157 / PYR-1) (Mycobacterium vanbaalenii)).